We begin with the raw amino-acid sequence, 122 residues long: Large ribosomal subunit protein bL12 (122 aa).

It belongs to the bacterial ribosomal protein bL12 family. As to quaternary structure, homodimer. Part of the ribosomal stalk of the 50S ribosomal subunit. Forms a multimeric L10(L12)X complex, where L10 forms an elongated spine to which 2 to 4 L12 dimers bind in a sequential fashion. Binds GTP-bound translation factors.

In terms of biological role, forms part of the ribosomal stalk which helps the ribosome interact with GTP-bound translation factors. Is thus essential for accurate translation. The chain is Large ribosomal subunit protein bL12 from Staphylococcus aureus (strain Newman).